The following is a 271-amino-acid chain: Dipeptidyl-peptidase 6 (271 aa).

2 consecutive SH3b domains span residues 1 to 64 (MNAI…LFDD) and 72 to 140 (QKAQ…HPKI). In terms of domain architecture, NlpC/P60 spans 148–268 (HAFRENVVQT…DLATTITAIG (121 aa)). Residue Cys-178 is the Nucleophile of the active site. His-224 (proton acceptor) is an active-site residue. His-236 is an active-site residue.

Belongs to the peptidase C40 family.

The protein localises to the cytoplasm. Functionally, involved in cell sporulation. Hydrolyzes gamma-D-Glu-L-(meso)A2pm linkages only in those peptide units that have a free N-terminal L-alanine. In Lysinibacillus sphaericus (Bacillus sphaericus), this protein is Dipeptidyl-peptidase 6.